A 528-amino-acid polypeptide reads, in one-letter code: MSDYLLQMNGIVKTFDGVKALNGIDIKVRPGECVGLCGENGAGKSTLMKVLSAVYPYGTWEGEILWDGNPLKAQSISETEAAGIVIIHQELTLVPDLSVAENIFMGHELTLRGGRMNYPAMIHRAETLMRELKVPDMNVALPVSQYGGGHQQLVEIAKALNKQARLLILDEPSSALTRSEIEVLLGIIHDLKAKGVACVYISHKLDEVAAVCDTISVIRDGKHIATTAMAEMDIPKIITQMVGREMSNLYPTDAHDIGEVIFEARNITCYDVDNPKRKRVDDISFVLKRGEILGIAGLVGAGRTELVSALFGAYPGRYSGEVWLDGQPVDTRTPLKSIRAGLCMVPEDRKRQGIIPDMGVGQNITLAVLDNYSKMTRIDAEAELGSIDREISRMHLKTASPFLPITSLSGGNQQKAVLAKMLLTRPRVLILDEPTRGVDVGAKYEIYKLMGALAAEGVAIIMVSSELAEVLGVSDRVLVIGEGRLCGDFINHELTQEQVLAAALSHPGDPDSNDPANNNHNDNDRKTT.

2 ABC transporter domains span residues 6–245 and 262–507; these read LQMN…VGRE and FEAR…LSHP. ATP is bound at residue 38–45; that stretch reads GENGAGKS. The tract at residues 504–528 is disordered; the sequence is LSHPGDPDSNDPANNNHNDNDRKTT.

It belongs to the ABC transporter superfamily. Xylose importer (TC 3.A.1.2.4) family. In terms of assembly, the complex is composed of two ATP-binding proteins (XylG), two transmembrane proteins (XylH) and a solute-binding protein (XylF).

The protein localises to the cell inner membrane. The catalysed reaction is D-xylose(out) + ATP + H2O = D-xylose(in) + ADP + phosphate + H(+). In terms of biological role, part of the ABC transporter complex XylFGH involved in xylose import. Responsible for energy coupling to the transport system. The sequence is that of Xylose import ATP-binding protein XylG from Pseudomonas syringae pv. tomato (strain ATCC BAA-871 / DC3000).